The following is a 44-amino-acid chain: Mu-conotoxin-like Cal 12.1.1e (44 aa).

Intrachain disulfides connect cysteine 3-cysteine 16, cysteine 11-cysteine 28, cysteine 18-cysteine 33, and cysteine 27-cysteine 38. At tryptophan 17 the chain carries 6'-bromotryptophan. Proline 23 is subject to 4-hydroxyproline. Tryptophan 36 and tryptophan 37 each carry 6'-bromotryptophan. Proline 39 is modified (4-hydroxyproline). Tryptophan 43 is modified (6'-bromotryptophan).

In terms of tissue distribution, expressed by the venom duct.

It localises to the secreted. Mu-conotoxins block voltage-gated sodium channels. This toxin reversibly blocks voltage-gated sodium channel in cephalopods, with no alteration in the voltage dependence of sodium conductance or on the kinetics of inactivation. This is Mu-conotoxin-like Cal 12.1.1e from Californiconus californicus (California cone).